A 72-amino-acid chain; its full sequence is Translation initiation factor IF-1 (72 aa).

An S1-like domain is found at Ala2–Lys72.

Belongs to the IF-1 family. In terms of assembly, component of the 30S ribosomal translation pre-initiation complex which assembles on the 30S ribosome in the order IF-2 and IF-3, IF-1 and N-formylmethionyl-tRNA(fMet); mRNA recruitment can occur at any time during PIC assembly.

The protein localises to the cytoplasm. One of the essential components for the initiation of protein synthesis. Stabilizes the binding of IF-2 and IF-3 on the 30S subunit to which N-formylmethionyl-tRNA(fMet) subsequently binds. Helps modulate mRNA selection, yielding the 30S pre-initiation complex (PIC). Upon addition of the 50S ribosomal subunit IF-1, IF-2 and IF-3 are released leaving the mature 70S translation initiation complex. This chain is Translation initiation factor IF-1, found in Lactococcus lactis subsp. lactis (strain IL1403) (Streptococcus lactis).